The primary structure comprises 630 residues: MNLNLDSAKDTLCKNILIYGYCKFENKGCAFSHHKPNVGQPPVSASSSSGYSGNSSPAEAKRKFNLNTPSFQPSNVQNITSKFAALSPKVKEIPVFVPSGGSGGAANTPNNGADANELLSQKKFNASTPSFMPAGFGSEYPSSPNTSGAGQPPNPYLTGNGHPASMAQSSGADVYYQQQAASYPLQYHLYAPAPPPRLTIPLPPHETNANSMFIPNDLRETLQKKNEATLQTLPRSNLPEHINIYHSLVPIDKSYDPKSKVWDVPSSLYKVFSSVDGNPYALRKIELNFPIINEAPFKTIKKWRSVKNANVTQLQEAFTSMAFGKSCLVVVYDYFPNSSTLIDHHKRIGTRTEPITEDLLWNYLVQLVNALMAIHAKGLAARSALDLTKIIVTNKNRIRLSNLAISDILNFEKDEEEISKSNRYFQGLQREDIKKLGRILLSLSTLTIPNTLRNNDTGELLRHLKTSSTISFSDEFIQVLTVLNEDTVEFDLDRFSQRYLTTRLFSTINNLEDSTDFMESQITTELENARLFRLLTKLNFIIDRPEAKDWTENSNKYIIKLFRDYIFFQHDEYGKPVVDLSRVLTNLNKLDAGIDEKFLLVSRDEKNCIIVSYKEIRDTIDSVFRNLTRD.

A C3H1-type zinc finger spans residues 7 to 36 (SAKDTLCKNILIYGYCKFENKGCAFSHHKP). Disordered regions lie at residues 38–72 (VGQP…PSFQ) and 135–171 (GFGS…QSSG). Residues 44-56 (SASSSSGYSGNSS) are compositionally biased toward low complexity. The segment covering 140–149 (YPSSPNTSGA) has biased composition (polar residues). The interval 231 to 501 (QTLPRSNLPE…LDRFSQRYLT (271 aa)) is pseudokinase domain. Residues Arg283, 333–340 (DYFPNSST), and 388–389 (TK) contribute to the ATP site. Residues 502–540 (TRLFSTINNLEDSTDFMESQITTELENARLFRLLTKLNF) are a coiled coil. The tract at residues 541-630 (IIDRPEAKDW…DSVFRNLTRD (90 aa)) is knob domain.

Belongs to the protein kinase superfamily. PAN3 family. Homodimer. Forms a heterotrimer with a catalytic subunit PAN2 to form the poly(A)-nuclease (PAN) deadenylation complex. Interacts (via PAM-2 motif) with poly(A)-binding protein PAB1 (via PABC domain), conferring substrate specificity of the enzyme complex.

It is found in the cytoplasm. Functionally, regulatory subunit of the poly(A)-nuclease (PAN) deadenylation complex, one of two cytoplasmic mRNA deadenylases involved in mRNA turnover. PAN specifically shortens poly(A) tails of RNA and the activity is stimulated by poly(A)-binding protein PAB1. PAN deadenylation is followed by rapid degradation of the shortened mRNA tails by the CCR4-NOT complex. Deadenylated mRNAs are then degraded by two alternative mechanisms, namely exosome-mediated 3'-5' exonucleolytic degradation, or deadenylation-dependent mRNA decaping and subsequent 5'-3' exonucleolytic degradation by XRN1. May also be involved in post-transcriptional maturation of mRNA poly(A) tails. PAN3 acts as a positive regulator for PAN activity, recruiting the catalytic subunit PAN2 to mRNA via its interaction with RNA and with PAB1. This chain is PAN2-PAN3 deadenylation complex subunit PAN3, found in Scheffersomyces stipitis (strain ATCC 58785 / CBS 6054 / NBRC 10063 / NRRL Y-11545) (Yeast).